The primary structure comprises 436 residues: 2-aminohexano-6-lactam racemase (436 aa).

Pyridoxal 5'-phosphate contacts are provided by residues 110–111 (GS), Tyr-137, and 238–241 (DEVK). Residue Tyr-137 is part of the active site. Lys-267 carries the post-translational modification N6-(pyridoxal phosphate)lysine. Thr-295 contacts pyridoxal 5'-phosphate.

It belongs to the class-III pyridoxal-phosphate-dependent aminotransferase family. Monomer. Pyridoxal 5'-phosphate is required as a cofactor.

The catalysed reaction is L-2-aminohexano-6-lactam = D-2-aminohexano-6-lactam. Catalyzes the interconversion of L-alpha-amino-epsilon-caprolactam and D-alpha-amino-epsilon-caprolactam. This Achromobacter obae protein is 2-aminohexano-6-lactam racemase.